An 873-amino-acid polypeptide reads, in one-letter code: Alanine--tRNA ligase (873 aa).

The Zn(2+) site is built by His559, His563, Cys661, and His665.

This sequence belongs to the class-II aminoacyl-tRNA synthetase family. In terms of assembly, homotetramer. Zn(2+) serves as cofactor.

The protein resides in the cytoplasm. The catalysed reaction is tRNA(Ala) + L-alanine + ATP = L-alanyl-tRNA(Ala) + AMP + diphosphate. Its function is as follows. Catalyzes the attachment of alanine to tRNA(Ala) in a two-step reaction: alanine is first activated by ATP to form Ala-AMP and then transferred to the acceptor end of tRNA(Ala). Also edits incorrectly charged Ser-tRNA(Ala) and Gly-tRNA(Ala) via its editing domain. This is Alanine--tRNA ligase from Wigglesworthia glossinidia brevipalpis.